Here is a 419-residue protein sequence, read N- to C-terminus: POU domain, class 4, transcription factor 1 (419 aa).

A POU-IV box motif is present at residues arginine 57–isoleucine 66. Disordered stretches follow at residues serine 94–leucine 117 and alanine 131–glycine 197. The span at alanine 99 to histidine 108 shows a compositional bias: basic residues. Over residues alanine 131 to glycine 184 the composition is skewed to gly residues. One can recognise a POU-specific domain in the interval serine 261–glycine 338. Positions lysine 356–phenylalanine 415 form a DNA-binding region, homeobox.

Belongs to the POU transcription factor family. Class-4 subfamily. As to quaternary structure, interacts (via N-terminus) with RIT2; the interaction controls POU4F1 transactivation activity on some neuronal target genes. Isoform 1 interacts with POU4F2; this interaction inhibits both POU4F1 DNA-binding and transcriptional activities. Isoform 1 interacts (C-terminus) with ESR1 (via DNA-binding domain); this interaction decreases the estrogen receptor ESR1 transcriptional activity in a DNA- and ligand 17-beta-estradiol-independent manner. Expressed in the brain and the retina. Present in the developing brain, spinal cord and eye.

It is found in the nucleus. The protein resides in the cytoplasm. Functionally, multifunctional transcription factor with different regions mediating its different effects. Acts by binding (via its C-terminal domain) to sequences related to the consensus octamer motif 5'-ATGCAAAT-3' in the regulatory regions of its target genes. Regulates the expression of specific genes involved in differentiation and survival within a subset of neuronal lineages. It has been shown that activation of some of these genes requires its N-terminal domain, maybe through a neuronal-specific cofactor. Activates BCL2 expression and protects neuronal cells from apoptosis (via the N-terminal domain). Induces neuronal process outgrowth and the coordinate expression of genes encoding synaptic proteins. Exerts its major developmental effects in somatosensory neurons and in brainstem nuclei involved in motor control. Stimulates the binding affinity of the nuclear estrogene receptor ESR1 to DNA estrogen response element (ERE), and hence modulates ESR1-induced transcriptional activity. May positively regulate POU4F2 and POU4F3. Regulates dorsal root ganglion sensory neuron specification and axonal projection into the spinal cord. Plays a role in TNFSF11-mediated terminal osteoclast differentiation. Negatively regulates its own expression interacting directly with a highly conserved autoregulatory domain surrounding the transcription initiation site. In terms of biological role, able to act as transcription factor, cannot regulate the expression of the same subset of genes than isoform 1. Does not have antiapoptotic effect on neuronal cells. The protein is POU domain, class 4, transcription factor 1 of Homo sapiens (Human).